The sequence spans 740 residues: 1,4-alpha-glucan branching enzyme GlgB (740 aa).

The Nucleophile role is filled by aspartate 414. The Proton donor role is filled by glutamate 467.

The protein belongs to the glycosyl hydrolase 13 family. GlgB subfamily. As to quaternary structure, monomer.

The catalysed reaction is Transfers a segment of a (1-&gt;4)-alpha-D-glucan chain to a primary hydroxy group in a similar glucan chain.. The protein operates within glycan biosynthesis; glycogen biosynthesis. Catalyzes the formation of the alpha-1,6-glucosidic linkages in glycogen by scission of a 1,4-alpha-linked oligosaccharide from growing alpha-1,4-glucan chains and the subsequent attachment of the oligosaccharide to the alpha-1,6 position. This chain is 1,4-alpha-glucan branching enzyme GlgB, found in Rhodospirillum rubrum (strain ATCC 11170 / ATH 1.1.1 / DSM 467 / LMG 4362 / NCIMB 8255 / S1).